The chain runs to 84 residues: Large ribosomal subunit protein bL27 (84 aa).

The interval 1 to 22 (MAHKKAGGSTRNGRDSESKRLG) is disordered.

This sequence belongs to the bacterial ribosomal protein bL27 family.

This Shewanella sp. (strain MR-4) protein is Large ribosomal subunit protein bL27.